Here is a 424-residue protein sequence, read N- to C-terminus: Glutamyl-tRNA reductase (424 aa).

Substrate contacts are provided by residues 49–52, Ser108, 113–115, and Gln119; these read TCNR and EPQ. Cys50 functions as the Nucleophile in the catalytic mechanism. 188–193 lines the NADP(+) pocket; sequence GAGETI.

It belongs to the glutamyl-tRNA reductase family. Homodimer.

The catalysed reaction is (S)-4-amino-5-oxopentanoate + tRNA(Glu) + NADP(+) = L-glutamyl-tRNA(Glu) + NADPH + H(+). Its pathway is porphyrin-containing compound metabolism; protoporphyrin-IX biosynthesis; 5-aminolevulinate from L-glutamyl-tRNA(Glu): step 1/2. In terms of biological role, catalyzes the NADPH-dependent reduction of glutamyl-tRNA(Glu) to glutamate 1-semialdehyde (GSA). This is Glutamyl-tRNA reductase from Hahella chejuensis (strain KCTC 2396).